A 240-amino-acid chain; its full sequence is MSKPKYNRVVLKLSGEALAGEQGFGINPTVIKSVAEQVKEIAELDVEVAVVVGGGNIWRGKIGSEMGMDRAGADYMGMLATVMNSLALQDSLENIGIQTRVQTSIEMRQVAEPYIRRKAVRHLEKKRVVIFAAGTGNPYFSTDTTAALRAAEIEADVILMAKNNVDGVYNADPSIDPTATKYETLTYLDVLKEGLGVMDSTASSLCMDNDIPLIVFSVMEKGNIKRAVLGENIGTVVRGK.

12-15 (KLSG) lines the ATP pocket. Positions 20 to 25 (GEQGFG) are involved in allosteric activation by GTP. UMP is bound at residue Gly-54. The ATP site is built by Gly-55 and Arg-59. UMP contacts are provided by residues Asp-74 and 135–142 (TGNPYFST). ATP is bound by residues Asn-163, Tyr-169, and Asp-172.

The protein belongs to the UMP kinase family. In terms of assembly, homohexamer.

It localises to the cytoplasm. The catalysed reaction is UMP + ATP = UDP + ADP. It participates in pyrimidine metabolism; CTP biosynthesis via de novo pathway; UDP from UMP (UMPK route): step 1/1. With respect to regulation, allosterically activated by GTP. Inhibited by UTP. Functionally, catalyzes the reversible phosphorylation of UMP to UDP. This is Uridylate kinase from Bacillus cereus (strain ATCC 14579 / DSM 31 / CCUG 7414 / JCM 2152 / NBRC 15305 / NCIMB 9373 / NCTC 2599 / NRRL B-3711).